A 241-amino-acid chain; its full sequence is tRNA (guanine-N(1)-)-methyltransferase (241 aa).

Residues G112 and 131–136 contribute to the S-adenosyl-L-methionine site; that span reads LGDFVL.

The protein belongs to the RNA methyltransferase TrmD family. Homodimer.

The protein localises to the cytoplasm. It catalyses the reaction guanosine(37) in tRNA + S-adenosyl-L-methionine = N(1)-methylguanosine(37) in tRNA + S-adenosyl-L-homocysteine + H(+). Specifically methylates guanosine-37 in various tRNAs. The sequence is that of tRNA (guanine-N(1)-)-methyltransferase from Clostridium novyi (strain NT).